The chain runs to 90 residues: Succinate dehydrogenase subunit 7, mitochondrial (90 aa).

The N-terminal 41 residues, 1 to 41, are a transit peptide targeting the mitochondrion; the sequence is MAQPAFLSALRSRLRSPQPQAPALPHLQPPRRGFHVELGAR.

Component of complex II composed of eight subunits in plants: four classical SDH subunits SDH1, SDH2, SDH3 and SDH4 (a flavoprotein (FP), an iron-sulfur protein (IP), and a cytochrome b composed of a large and a small subunit.), as well as four subunits unknown in mitochondria from bacteria and heterotrophic eukaryotes.

It localises to the mitochondrion inner membrane. Its pathway is carbohydrate metabolism; tricarboxylic acid cycle. This chain is Succinate dehydrogenase subunit 7, mitochondrial, found in Oryza sativa subsp. japonica (Rice).